The primary structure comprises 779 residues: Polyribonucleotide nucleotidyltransferase (779 aa).

Residues Asp-490 and Asp-496 each coordinate Mg(2+). In terms of domain architecture, KH spans 557 to 618 (PHILSLKINP…EAVKARIEAV (62 aa)). The S1 motif domain maps to 625-693 (GEEFEGTVVK…DRGKIDLIRP (69 aa)). Residues 699-752 (VPLREPRAPRGGDRGPRRDSDRGGDRGPRREFSDRGPRPEGARSERPEGQRTER) are compositionally biased toward basic and acidic residues. The interval 699-779 (VPLREPRAPR…AAPVFPRRED (81 aa)) is disordered. The segment covering 757–767 (PATQESSQSSD) has biased composition (polar residues).

This sequence belongs to the polyribonucleotide nucleotidyltransferase family. Mg(2+) is required as a cofactor.

The protein resides in the cytoplasm. It catalyses the reaction RNA(n+1) + phosphate = RNA(n) + a ribonucleoside 5'-diphosphate. Its function is as follows. Involved in mRNA degradation. Catalyzes the phosphorolysis of single-stranded polyribonucleotides processively in the 3'- to 5'-direction. This chain is Polyribonucleotide nucleotidyltransferase, found in Deinococcus radiodurans (strain ATCC 13939 / DSM 20539 / JCM 16871 / CCUG 27074 / LMG 4051 / NBRC 15346 / NCIMB 9279 / VKM B-1422 / R1).